The sequence spans 336 residues: Corrinoid adenosyltransferase PduO (336 aa).

The pduON stretch occupies residues 1–185 (MAIYTRTGDA…IIREVSKRYL (185 aa)). Positions 194-336 (KETTPVALSF…IAAINVGTHQ (143 aa)) are pduOC. Heme is bound at residue His207. Mg(2+) contacts are provided by Glu215 and Gln218.

Belongs to the Cob(I)alamin adenosyltransferase family. PduO subfamily. As to quaternary structure, the C-terminal domain (PduOC) forms stable octamers and also crystallizes as an octamer. Forms a complex with PduS. Requires heme b as cofactor. The cofactor is Mg(2+).

Its subcellular location is the bacterial microcompartment. The enzyme catalyses cob(I)alamin-[corrinoid adenosyltransferase] + ATP = apo-[corrinoid adenosyltransferase] + adenosylcob(III)alamin + triphosphate. It participates in polyol metabolism; 1,2-propanediol degradation. It functions in the pathway cofactor biosynthesis; adenosylcobalamin biosynthesis. Its activity is regulated as follows. Inhibited by ADP but not significantly by other nucleotides, inhibited by diphosphate and less well by triphosphate. In terms of biological role, converts cob(I)alamin to adenosylcobalamin (adenosylcob(III)alamin), the cofactor for propanediol dehydratase. Found in the bacterial microcompartment (BMC) dedicated to 1,2-propanediol (1,2-PD) degradation. For adenosylcobalamin synthesis dATP can replace ATP, but no other nucleotides will substitute. PduS and PduO allow regeneration of the adenosylcobalamin cofactor within the BMC. The 1,2-PD-specific bacterial microcompartment (BMC) concentrates low levels of 1,2-PD catabolic enzymes, concentrates volatile reaction intermediates thus enhancing pathway flux and keeps the level of toxic, mutagenic propionaldehyde low. The sequence is that of Corrinoid adenosyltransferase PduO from Salmonella typhimurium (strain LT2 / SGSC1412 / ATCC 700720).